A 471-amino-acid polypeptide reads, in one-letter code: Eukaryotic translation initiation factor 3 subunit M (471 aa).

The segment at 39-61 is disordered; it reads EISSLLEPLRQQEQSEEEPDRKQ. Positions 206 to 377 constitute a PCI domain; it reads DFELAQSHVV…SEFLVHRATY (172 aa). Positions 419-471 are disordered; that stretch reads QAATEEANQGKSGEKGGKGGDRRRNPQHQQQQQQSQPSQPQQPRETELVAGAE. Positions 430–442 are enriched in basic and acidic residues; the sequence is SGEKGGKGGDRRR. The span at 445 to 461 shows a compositional bias: low complexity; the sequence is QHQQQQQQSQPSQPQQP.

This sequence belongs to the eIF-3 subunit M family. In terms of assembly, component of the eukaryotic translation initiation factor 3 (eIF-3) complex.

It localises to the cytoplasm. Its function is as follows. Component of the eukaryotic translation initiation factor 3 (eIF-3) complex, which is involved in protein synthesis of a specialized repertoire of mRNAs and, together with other initiation factors, stimulates binding of mRNA and methionyl-tRNAi to the 40S ribosome. The eIF-3 complex specifically targets and initiates translation of a subset of mRNAs involved in cell proliferation. This Aspergillus clavatus (strain ATCC 1007 / CBS 513.65 / DSM 816 / NCTC 3887 / NRRL 1 / QM 1276 / 107) protein is Eukaryotic translation initiation factor 3 subunit M.